The sequence spans 362 residues: C-C chemokine receptor type 10 (362 aa).

Over 1–48 (MGTKPTEQVSWGLYSGYDEEAYSVGPLPELCYKADVQAFSRAFQPSVS) the chain is Extracellular. Residues 49-69 (LMVAVLGLAGNGLVLATHLAA) traverse the membrane as a helical segment. Over 70–80 (RRTTRSPTSVH) the chain is Cytoplasmic. A helical transmembrane segment spans residues 81-101 (LLQLALADLLLALTLPFAAAG). The Extracellular portion of the chain corresponds to 102 to 115 (ALQGWNLGSTTCRA). The cysteines at positions 113 and 191 are disulfide-linked. The helical transmembrane segment at 116–136 (ISGLYSASFHAGFLFLACISA) threads the bilayer. Topologically, residues 137-159 (DRYVAIARALPAGQRPSTPSRAH) are cytoplasmic. A helical transmembrane segment spans residues 160 to 180 (LVSVFVWLLSLFLALPALLFS). Residues 181-208 (RDGPREGQRRCRLIFPESLTQTVKGASA) are Extracellular-facing. Residues 209 to 229 (VAQVVLGFALPLGVMAACYAL) traverse the membrane as a helical segment. Residues 230–247 (LGRTLLAARGPERRRALR) are Cytoplasmic-facing. Residues 248-268 (VVVALVVAFVVLQLPYSLALL) form a helical membrane-spanning segment. Topologically, residues 269 to 291 (LDTADLLAARERSCSSSKRKDLA) are extracellular. The chain crosses the membrane as a helical span at residues 292-312 (LLVTGGLTLVRCSLNPVLYAF). The Cytoplasmic segment spans residues 313–362 (LGLRFRRDLRRLLQGGGCSPKPNPRGRCPRRLRLSSCSAPTETHSLSWDN).

This sequence belongs to the G-protein coupled receptor 1 family. As to expression, expressed at high levels in small intestine, colon, lymph nodes, Peyer patches and at lower levels in thymus, lung and spleen.

It localises to the cell membrane. Functionally, receptor for chemokines SCYA27 and SCYA28. Subsequently transduces a signal by increasing the intracellular calcium ions level. In Mus musculus (Mouse), this protein is C-C chemokine receptor type 10 (Ccr10).